The sequence spans 339 residues: U11/U12 small nuclear ribonucleoprotein 48 kDa protein (339 aa).

The CHHC U11-48K-type zinc-finger motif lies at 55–82 (VVICPYDSNHHMPKSSLAKHMASCRLRK). Residues cysteine 58, histidine 64, histidine 74, and cysteine 78 each contribute to the Zn(2+) site. Residues lysine 87 and lysine 104 each participate in a glycyl lysine isopeptide (Lys-Gly) (interchain with G-Cter in SUMO2) cross-link. A disordered region spans residues 255–339 (HWQEEQEKAE…HSHKRRKQKI (85 aa)). Residues 294–309 (RHRRDRSRSPHKRKRN) are compositionally biased toward basic residues. Residues 310-328 (KDKDKNCESRRRKERDGER) show a composition bias toward basic and acidic residues. Basic residues predominate over residues 329 to 339 (HHSHKRRKQKI).

As to quaternary structure, component of the U11/U12 snRNPs that are part of the U12-type spliceosome. Not found in the major spliceosome.

It is found in the nucleus. In terms of biological role, likely involved in U12-type 5' splice site recognition. This is U11/U12 small nuclear ribonucleoprotein 48 kDa protein (SNRNP48) from Homo sapiens (Human).